Consider the following 60-residue polypeptide: Cytotoxin 8 (60 aa).

4 disulfides stabilise this stretch: Cys-3–Cys-21, Cys-14–Cys-38, Cys-42–Cys-53, and Cys-54–Cys-59.

Belongs to the three-finger toxin family. Short-chain subfamily. Type IA cytotoxin sub-subfamily. In terms of assembly, monomer in solution; Homodimer and oligomer in the presence of negatively charged lipids forming a pore with a size ranging between 20 and 30 Angstroms. In terms of tissue distribution, expressed by the venom gland.

The protein resides in the secreted. It localises to the target cell membrane. Its function is as follows. Shows cytolytic activity on many different cells by forming pore in lipid membranes. In vivo, increases heart rate or kills the animal by cardiac arrest. In addition, it binds to heparin with high affinity, interacts with Kv channel-interacting protein 1 (KCNIP1) in a calcium-independent manner, and binds to integrin alpha-V/beta-3 (ITGAV/ITGB3) with moderate affinity. Has hemolytic activity towards human erythrocytes (EC(50)=0.074 uM) and cytolytic activity towards various cell lines. The polypeptide is Cytotoxin 8 (Naja naja (Indian cobra)).